The sequence spans 288 residues: Quinate/shikimate dehydrogenase (288 aa).

Residues Lys-71 and Asp-107 each contribute to the substrate site. Residues Ala-132 to Ala-135, Asn-155 to Asp-158, Lys-205, Cys-232 to Asn-235, and Gly-255 each bind NAD(+).

This sequence belongs to the shikimate dehydrogenase family. Homodimer.

The enzyme catalyses L-quinate + NAD(+) = 3-dehydroquinate + NADH + H(+). The catalysed reaction is L-quinate + NADP(+) = 3-dehydroquinate + NADPH + H(+). It catalyses the reaction shikimate + NADP(+) = 3-dehydroshikimate + NADPH + H(+). It carries out the reaction shikimate + NAD(+) = 3-dehydroshikimate + NADH + H(+). It functions in the pathway metabolic intermediate biosynthesis; chorismate biosynthesis; chorismate from D-erythrose 4-phosphate and phosphoenolpyruvate: step 4/7. In terms of biological role, the actual biological function of YdiB remains unclear, nor is it known whether 3-dehydroshikimate or quinate represents the natural substrate. Catalyzes the reversible NAD-dependent reduction of both 3-dehydroshikimate (DHSA) and 3-dehydroquinate to yield shikimate (SA) and quinate, respectively. It can use both NAD or NADP for catalysis, however it has higher catalytic efficiency with NAD. The chain is Quinate/shikimate dehydrogenase from Escherichia coli O1:K1 / APEC.